A 244-amino-acid chain; its full sequence is Protein-L-isoaspartate O-methyltransferase (244 aa).

The segment at 1–39 (MINPFSSFRWRHSSRSPAGIPEVEPQPPDASDPFASQRE) is disordered. S92 is an active-site residue.

Belongs to the methyltransferase superfamily. L-isoaspartyl/D-aspartyl protein methyltransferase family.

Its subcellular location is the cytoplasm. It carries out the reaction [protein]-L-isoaspartate + S-adenosyl-L-methionine = [protein]-L-isoaspartate alpha-methyl ester + S-adenosyl-L-homocysteine. Its function is as follows. Catalyzes the methyl esterification of L-isoaspartyl residues in peptides and proteins that result from spontaneous decomposition of normal L-aspartyl and L-asparaginyl residues. It plays a role in the repair and/or degradation of damaged proteins. This chain is Protein-L-isoaspartate O-methyltransferase, found in Synechococcus sp. (strain JA-2-3B'a(2-13)) (Cyanobacteria bacterium Yellowstone B-Prime).